Reading from the N-terminus, the 140-residue chain is uncharacterized protein (140 aa).

Polar residues predominate over residues 1–19 (MGLCGSKTQPMPSQTTTVA). Positions 1 to 140 (MGLCGSKTQP…ERERENMIYD (140 aa)) are disordered. A lipid anchor (N-myristoyl glycine) is attached at glycine 2. Residue cysteine 4 is the site of S-palmitoyl cysteine attachment. Residues 27 to 40 (INRDTVKSKQELRH) show a composition bias toward basic and acidic residues. The segment covering 41–51 (KEKKDKKKKTQ) has biased composition (basic residues). Over residues 73–140 (DPSKNKVSPK…ERERENMIYD (68 aa)) the composition is skewed to basic and acidic residues.

This sequence to S.pombe new13. Myristoylated. In terms of processing, the N-myristoylated protein is further palmitoylated by ERF2, PFA4 and slightly by PFA5, but not by PFA3.

The protein resides in the cytoplasm. It is found in the cytosol. This is an uncharacterized protein from Saccharomyces cerevisiae (strain ATCC 204508 / S288c) (Baker's yeast).